Consider the following 160-residue polypeptide: C-type lectin mosGCTL-1 (160 aa).

The signal sequence occupies residues 1 to 20; sequence MLTKGITLILLLVLVHSSHG. In terms of domain architecture, C-type lectin spans 23–140; sequence TPNRKFYIPS…YHWSWNDNTC (118 aa). 2 disulfides stabilise this stretch: C44-C140 and C120-C140. A glycan (N-linked (GlcNAc...) asparagine) is linked at N76.

As to quaternary structure, interacts with putative receptor-type tyrosine-protein phosphatase mosPTP-1; the interaction probably mediates the recruitment of West Nile virus particles in complex with C-type lectin mosGCTL-1 to the cell surface. (Microbial infection) Interacts with envelope protein E and virions of West Nile virus in a calcium-dependent manner. In terms of tissue distribution, female salivary gland (at protein level).

The protein resides in the secreted. Functionally, putative lectin. (Microbial infection) Facilitates West Nile virus infection in mosquitoes probably via capturing viral particles and presenting them to a ligand on the cell surface, thereby facilitating viral entry. The protein is C-type lectin mosGCTL-1 of Aedes aegypti (Yellowfever mosquito).